The primary structure comprises 201 residues: Probable nicotinate-nucleotide adenylyltransferase (201 aa).

The protein belongs to the NadD family.

It catalyses the reaction nicotinate beta-D-ribonucleotide + ATP + H(+) = deamido-NAD(+) + diphosphate. It functions in the pathway cofactor biosynthesis; NAD(+) biosynthesis; deamido-NAD(+) from nicotinate D-ribonucleotide: step 1/1. Catalyzes the reversible adenylation of nicotinate mononucleotide (NaMN) to nicotinic acid adenine dinucleotide (NaAD). This chain is Probable nicotinate-nucleotide adenylyltransferase, found in Neisseria gonorrhoeae (strain ATCC 700825 / FA 1090).